Consider the following 95-residue polypeptide: Aspartyl/glutamyl-tRNA(Asn/Gln) amidotransferase subunit C (95 aa).

It belongs to the GatC family. In terms of assembly, heterotrimer of A, B and C subunits.

The enzyme catalyses L-glutamyl-tRNA(Gln) + L-glutamine + ATP + H2O = L-glutaminyl-tRNA(Gln) + L-glutamate + ADP + phosphate + H(+). The catalysed reaction is L-aspartyl-tRNA(Asn) + L-glutamine + ATP + H2O = L-asparaginyl-tRNA(Asn) + L-glutamate + ADP + phosphate + 2 H(+). Its function is as follows. Allows the formation of correctly charged Asn-tRNA(Asn) or Gln-tRNA(Gln) through the transamidation of misacylated Asp-tRNA(Asn) or Glu-tRNA(Gln) in organisms which lack either or both of asparaginyl-tRNA or glutaminyl-tRNA synthetases. The reaction takes place in the presence of glutamine and ATP through an activated phospho-Asp-tRNA(Asn) or phospho-Glu-tRNA(Gln). The chain is Aspartyl/glutamyl-tRNA(Asn/Gln) amidotransferase subunit C from Paracoccus denitrificans (strain Pd 1222).